Reading from the N-terminus, the 212-residue chain is Nascent polypeptide-associated complex subunit alpha (212 aa).

Disordered stretches follow at residues methionine 1–glutamate 54 and glutamine 123–aspartate 177. Residues alanine 22–glutamate 38 are compositionally biased toward acidic residues. Residues serine 51 to alanine 116 form the NAC-A/B domain. A compositionally biased stretch (basic and acidic residues) spans glutamate 128–lysine 157. A compositionally biased stretch (acidic residues) spans lysine 158 to aspartate 169. The UBA domain maps to leucine 173–isoleucine 212.

This sequence belongs to the NAC-alpha family. As to quaternary structure, part of the nascent polypeptide-associated complex (NAC), consisting of EGD2 and EGD1. NAC associates with ribosomes via EGD1.

The protein resides in the cytoplasm. It is found in the nucleus. Its function is as follows. Component of the nascent polypeptide-associated complex (NAC), a dynamic component of the ribosomal exit tunnel, protecting the emerging polypeptides from interaction with other cytoplasmic proteins to ensure appropriate nascent protein targeting. The NAC complex also promotes mitochondrial protein import by enhancing productive ribosome interactions with the outer mitochondrial membrane and blocks the inappropriate interaction of ribosomes translating non-secretory nascent polypeptides with translocation sites in the membrane of the endoplasmic reticulum. EGD2 may also be involved in transcription regulation. The chain is Nascent polypeptide-associated complex subunit alpha (egd2) from Botryotinia fuckeliana (strain B05.10) (Noble rot fungus).